A 76-amino-acid chain; its full sequence is Acyl carrier protein (76 aa).

The 75-residue stretch at 1-75 folds into the Carrier domain; sequence MVFEKIKALI…DIVFYITKNT (75 aa). Residue Ser35 is modified to O-(pantetheine 4'-phosphoryl)serine.

Belongs to the acyl carrier protein (ACP) family. Post-translationally, 4'-phosphopantetheine is transferred from CoA to a specific serine of apo-ACP by AcpS. This modification is essential for activity because fatty acids are bound in thioester linkage to the sulfhydryl of the prosthetic group.

Its subcellular location is the cytoplasm. The protein operates within lipid metabolism; fatty acid biosynthesis. Its function is as follows. Carrier of the growing fatty acid chain in fatty acid biosynthesis. The sequence is that of Acyl carrier protein from Onion yellows phytoplasma (strain OY-M).